The chain runs to 559 residues: Cytokine-like nuclear factor N-PAC (559 aa).

Positions 9-70 (VNDLVWAKMK…ETQIKPYQEF (62 aa)) constitute a PWWP domain. Positions 106 to 137 (SEQDNRPDPDVEFNKLREGGTESGEETTVNNT) are disordered. Residues 108-125 (QDNRPDPDVEFNKLREGG) show a composition bias toward basic and acidic residues. Residues 267-559 (RNIQASNLKF…SSAVYVRARF (293 aa)) are dehydrogenase domain. NAD(+)-binding positions include 277–291 (GFLGLGIMGCGMVKN) and Lys511.

The protein belongs to the HIBADH-related family. NP60 subfamily. Binds to mononucleosomes.

The protein localises to the chromosome. Functionally, nucleosome-destabilizing factor that is recruited to genes during transcriptional activation and colocalizes with a subset of trimethylated 'Lys-36' histone H3 (H3K36me3)-enriched regions. In Aedes aegypti (Yellowfever mosquito), this protein is Cytokine-like nuclear factor N-PAC.